We begin with the raw amino-acid sequence, 785 residues long: Cation/H(+) antiporter 1 (785 aa).

Transmembrane regions (helical) follow at residues L19 to F39, G44 to I64, Y79 to I99, I112 to F132, F143 to I163, L179 to L199, F201 to I221, Y240 to I260, Y294 to V314, L323 to A343, Q352 to L372, and M389 to L409.

This sequence belongs to the monovalent cation:proton antiporter 2 (CPA2) transporter (TC 2.A.37) family. CHX (TC 2.A.37.4) subfamily. As to expression, specifically expressed in pollen.

It localises to the membrane. Functionally, may operate as a cation/H(+) antiporter. The polypeptide is Cation/H(+) antiporter 1 (CHX1) (Arabidopsis thaliana (Mouse-ear cress)).